A 399-amino-acid polypeptide reads, in one-letter code: MIITSLLDTDLYKFTMMQVVLHHFPAANVEYRFRCRTPGVDLVPYIDEIRDEVRGLCSLRFADVELDYLRRMRFIKSDFVDFLALFHLNEKYISITPSPKGNGEIDIVIEGPWLHTILFEIPVLAIVNEVYFRNTQREPDYREGRERLREKIKLLGAKPEFADCKIADYGTRRRFSKVWHEEVALTLRDGLGPQFAGTSNVLYAMKHDITPLGTMAHEYLQACQALGPRLRDSQIYGFEMWAKEYRGDLGIALSDVYGMDAFLNDFDMYFCKLFDGARHDSGDPFEWGERMLRHYEANRCDPRTKVLVFSDALDIPKVMQLYERFRGRCKLAFGVGTNLTNDLGYVPLQIVIKMVRCNGQPVAKLSDSPGKSMCDDKAYLAYLRQVFGIAQPVDEDASK.

A Phosphohistidine; by autocatalysis modification is found at H217.

The protein belongs to the NAPRTase family. Transiently phosphorylated on a His residue during the reaction cycle. Phosphorylation strongly increases the affinity for substrates and increases the rate of nicotinate D-ribonucleotide production. Dephosphorylation regenerates the low-affinity form of the enzyme, leading to product release.

The enzyme catalyses nicotinate + 5-phospho-alpha-D-ribose 1-diphosphate + ATP + H2O = nicotinate beta-D-ribonucleotide + ADP + phosphate + diphosphate. It participates in cofactor biosynthesis; NAD(+) biosynthesis; nicotinate D-ribonucleotide from nicotinate: step 1/1. Functionally, catalyzes the synthesis of beta-nicotinate D-ribonucleotide from nicotinate and 5-phospho-D-ribose 1-phosphate at the expense of ATP. The chain is Nicotinate phosphoribosyltransferase from Burkholderia cenocepacia (strain HI2424).